The primary structure comprises 78 residues: Short neurotoxin SNTX14 (78 aa).

The signal sequence occupies residues 1 to 21 (MKTLLLTFLVVTIVCLDLGYT). Intrachain disulfides connect Cys-24/Cys-40, Cys-33/Cys-58, Cys-62/Cys-70, and Cys-71/Cys-76.

The protein belongs to the three-finger toxin family. Short-chain subfamily. In terms of tissue distribution, expressed by the venom gland.

It is found in the secreted. In terms of biological role, this three-finger toxin binds and inhibits the nicotinic acetylcholine receptor (nAChR). This chain is Short neurotoxin SNTX14, found in Ophiophagus hannah (King cobra).